We begin with the raw amino-acid sequence, 89 residues long: Small ribosomal subunit protein uS19 (89 aa).

Belongs to the universal ribosomal protein uS19 family.

In terms of biological role, protein S19 forms a complex with S13 that binds strongly to the 16S ribosomal RNA. The chain is Small ribosomal subunit protein uS19 from Stenotrophomonas maltophilia (strain K279a).